Consider the following 291-residue polypeptide: Stomatin-like protein 3 (291 aa).

At S7 the chain carries Phosphoserine. A helical; Signal-anchor for type III membrane protein membrane pass occupies residues 29 to 49 (WILFSLSFLLVIITFPISIWM). At 50-291 (CLKIIKEYER…DNHKKLPNKA (242 aa)) the chain is on the cytoplasmic side. S241 carries the post-translational modification Phosphoserine.

This sequence belongs to the band 7/mec-2 family. In terms of assembly, homodimer. Interacts with PIEZO1 and PIEZO2.

The protein resides in the cell membrane. In terms of biological role, required for the function of many mechanoreceptors. Modulate mechanotransduction channels and acid-sensing ion channels (ASIC) proteins. Potentiates PIEZO1 and PIEZO2 function by increasing their sensitivity to mechanical stimulations. This chain is Stomatin-like protein 3 (STOML3), found in Homo sapiens (Human).